Reading from the N-terminus, the 89-residue chain is MSDEKQELFEFPCRFPLKIMGERHDEFVTTITEVVRVHAPDLAEIDVVLRESSGGRFYALTVTVTATSRQQLDNIYLSLTGHPMVKMVL.

The protein belongs to the UPF0250 family.

This is UPF0250 protein CV_3095 from Chromobacterium violaceum (strain ATCC 12472 / DSM 30191 / JCM 1249 / CCUG 213 / NBRC 12614 / NCIMB 9131 / NCTC 9757 / MK).